The primary structure comprises 87 residues: Small ribosomal subunit protein bS20 (87 aa).

A disordered region spans residues 1-27 (MANIKSAKKRAVTSEKRRKHNASRRSM).

Belongs to the bacterial ribosomal protein bS20 family.

Binds directly to 16S ribosomal RNA. This Erwinia tasmaniensis (strain DSM 17950 / CFBP 7177 / CIP 109463 / NCPPB 4357 / Et1/99) protein is Small ribosomal subunit protein bS20.